We begin with the raw amino-acid sequence, 413 residues long: SET and MYND domain-containing protein DDB_G0273591 (413 aa).

One can recognise an SET domain in the interval 6-311; that stretch reads DGLKLSNSEL…KGDQINISYL (306 aa). An MYND-type zinc finger spans residues 51–95; the sequence is CYNCIKLIKSPSPQQVPRCFGCNEVWYCSEKCKQDNQAKHQHYEC. The interval 205–232 is disordered; the sequence is DNNNNNNNNNNNNNNNNNNNNNNNNNNN. A coiled-coil region spans residues 216–243; that stretch reads NNNNNNNNNNNNNNNNNNNIEELIKLIR.

The protein belongs to the class V-like SAM-binding methyltransferase superfamily.

Its function is as follows. Probable methyltransferase. The chain is SET and MYND domain-containing protein DDB_G0273591 from Dictyostelium discoideum (Social amoeba).